We begin with the raw amino-acid sequence, 390 residues long: MNTEQLKQAFLDVFGQEADATFFSPGRINLIGEHTDYNGGHVFPAAITLGTYGAARKRDDQVLRFYSANFEELGIIEVDLNNLVFDKADNWTNYAKGVLKFLKEAGHVIDTGMEVFVYGNIPNGSGLSSSASLELLIGIIAEELYGLELTRLDLVKIGKQTENHFIGVNSGIMDQFAIGMGADNRAIYLDTNSLEYELVPLDLGDHVIVIMNTNKRRELADSKYNERRAECEKAVEELNAVLNIQTLGELDEWTFDQYSYLIKDENRIKRARHAVLENQRTLQARKALEEGDLATFGRLVNASHVSLEHDYEVTGLELDTLAHTAWEQEGVLGARMTGAGFGGCGIAIVHKDKVEAFKENVGKTYTEVVGYAPSFYVAEIAGGSRVLSRK.

Position 33-36 (33-36 (EHTD)) interacts with substrate. Residues Ser67 and 124-130 (GSGLSSS) contribute to the ATP site. Positions 130 and 162 each coordinate Mg(2+). The active-site Proton acceptor is the Asp174. Residue Tyr224 participates in substrate binding.

Belongs to the GHMP kinase family. GalK subfamily.

The protein resides in the cytoplasm. The enzyme catalyses alpha-D-galactose + ATP = alpha-D-galactose 1-phosphate + ADP + H(+). It functions in the pathway carbohydrate metabolism; galactose metabolism. Catalyzes the transfer of the gamma-phosphate of ATP to D-galactose to form alpha-D-galactose-1-phosphate (Gal-1-P). This is Galactokinase from Streptococcus suis (strain 05ZYH33).